The sequence spans 287 residues: Ribonuclease Z (287 aa).

The Zn(2+) site is built by His64, His66, Asp68, His69, His124, Asp191, and His250. Asp68 acts as the Proton acceptor in catalysis.

The protein belongs to the RNase Z family. As to quaternary structure, homodimer. It depends on Zn(2+) as a cofactor.

The enzyme catalyses Endonucleolytic cleavage of RNA, removing extra 3' nucleotides from tRNA precursor, generating 3' termini of tRNAs. A 3'-hydroxy group is left at the tRNA terminus and a 5'-phosphoryl group is left at the trailer molecule.. Functionally, zinc phosphodiesterase, which displays some tRNA 3'-processing endonuclease activity. Probably involved in tRNA maturation, by removing a 3'-trailer from precursor tRNA. The sequence is that of Ribonuclease Z from Pyrobaculum calidifontis (strain DSM 21063 / JCM 11548 / VA1).